Here is a 526-residue protein sequence, read N- to C-terminus: ATP-dependent RNA helicase DBP3 (526 aa).

The segment covering 1–33 has biased composition (basic and acidic residues); that stretch reads MVEEHKNKKRRQEDGPADVPEKKVKVSKSEKKD. Positions 1-86 are disordered; sequence MVEEHKNKKR…SSQGYTQSES (86 aa). Residues 34–65 show a composition bias toward basic residues; the sequence is KKEKKEKKEKKEKKEKKEKKEKKEKKEKKKKY. The span at 69–86 shows a compositional bias: polar residues; sequence ATISGSAQSSQGYTQSES. The Q motif motif lies at 118–144; that stretch reads LSFDQIQLNSKISAVVNKFPTPTPIQS. The 172-residue stretch at 147 to 318 folds into the Helicase ATP-binding domain; that stretch reads WPYLLSGKDV…STFMNQPVKV (172 aa). 160-167 serves as a coordination point for ATP; the sequence is AETGSGKT. Positions 265-268 match the DEAD box motif; the sequence is DEAD. The 163-residue stretch at 334 to 496 folds into the Helicase C-terminal domain; sequence QIVEVIEPFD…PVPDELLKFG (163 aa).

It belongs to the DEAD box helicase family. DDX5/DBP2 subfamily.

It is found in the nucleus. It localises to the nucleolus. The catalysed reaction is ATP + H2O = ADP + phosphate + H(+). Functionally, ATP-dependent RNA helicase required for 60S ribosomal subunit synthesis. Involved in efficient pre-rRNA processing, predominantly at site A3, which is necessary for the normal formation of 25S and 5.8S rRNAs. The sequence is that of ATP-dependent RNA helicase DBP3 (DBP3) from Scheffersomyces stipitis (strain ATCC 58785 / CBS 6054 / NBRC 10063 / NRRL Y-11545) (Yeast).